The following is a 281-amino-acid chain: Diaminopimelate epimerase (281 aa).

Residues N13 and N66 each coordinate substrate. Residue C75 is the Proton donor of the active site. Substrate contacts are provided by residues 76-77 (GN), N164, N197, and 215-216 (ER). The active-site Proton acceptor is C224. 225–226 (GT) provides a ligand contact to substrate.

This sequence belongs to the diaminopimelate epimerase family. In terms of assembly, homodimer.

The protein resides in the cytoplasm. It catalyses the reaction (2S,6S)-2,6-diaminopimelate = meso-2,6-diaminopimelate. It participates in amino-acid biosynthesis; L-lysine biosynthesis via DAP pathway; DL-2,6-diaminopimelate from LL-2,6-diaminopimelate: step 1/1. In terms of biological role, catalyzes the stereoinversion of LL-2,6-diaminopimelate (L,L-DAP) to meso-diaminopimelate (meso-DAP), a precursor of L-lysine and an essential component of the bacterial peptidoglycan. This Microcystis aeruginosa (strain NIES-843 / IAM M-2473) protein is Diaminopimelate epimerase.